Here is a 606-residue protein sequence, read N- to C-terminus: Urocanate reductase (606 aa).

Residues 1–40 (MSNLSRRNFITGGAIAALGGTLAIAGCAPKGESSSTVAGA) constitute a signal peptide (tat-type signal). Thr111 is modified (FMN phosphoryl threonine). Residues Ala163, Glu182, Thr191, Gly195, Gly196, Ala197, Ala305, and Asp373 each contribute to the FAD site. Arg433 acts as the Proton donor in catalysis. Glu572 and Ile588 together coordinate FAD.

Belongs to the FAD-dependent oxidoreductase 2 family. FRD/SDH subfamily. The cofactor is FAD. Requires FMN as cofactor. In terms of processing, predicted to be exported by the Tat system. The position of the signal peptide cleavage has not been experimentally proven.

The enzyme catalyses dihydrourocanate + A = urocanate + AH2. Catalyzes the two-electron reduction of urocanate to dihydrourocanate (also named imidazole propionate or deamino-histidine). Dihydrourocanate is present at higher concentrations in subjects with type 2 diabetes, and directly impairs glucose tolerance and insulin signaling at the level of insulin receptor substrate (IRS) through activation of p38 gamma (MAPK12)-p62-mTORC1. Therefore, the UrdA enzyme from the gut bacteria E.lenta strain DSM 2243 may contribute to the pathogenesis of type 2 diabetes by producing the microbial metabolite dihydrourocanate. This chain is Urocanate reductase, found in Eggerthella lenta (strain ATCC 25559 / DSM 2243 / CCUG 17323 / JCM 9979 / KCTC 3265 / NCTC 11813 / VPI 0255 / 1899 B) (Eubacterium lentum).